A 767-amino-acid polypeptide reads, in one-letter code: Integrin beta-8 (767 aa).

An N-terminal signal peptide occupies residues 1–21; the sequence is MCGSALAFLTAALLSLHNCQR. At 22-681 the chain is on the extracellular side; it reads GPALVLGAAW…SECLSGPSYL (660 aa). Residues 46–95 form the PSI domain; the sequence is RCGSANVVSCARCLQLGPECGWCVQEDFVSGGSGSERCDTVSSLISKGCP. 25 cysteine pairs are disulfide-bonded: C47–C65, C55–C469, C58–C83, C68–C94, C211–C218, C266–C307, C407–C419, C439–C467, C471–C490, C471–C493, C481–C493, C498–C527, C510–C525, C519–C530, C532–C545, C552–C566, C560–C571, C573–C582, C584–C608, C592–C606, C600–C611, C613–C623, C626–C629, C633–C660, and C639–C656. In terms of domain architecture, VWFA spans 146-384; it reads PVDLYYLVDV…NLVVEAYKKI (239 aa). D154 and S156 together coordinate Mg(2+). D193 serves as a coordination point for Ca(2+). N-linked (GlcNAc...) asparagine glycosylation occurs at N233. The Ca(2+) site is built by N249, D251, P253, and E254. E254 contributes to the Mg(2+) binding site. The N-linked (GlcNAc...) asparagine glycan is linked to N402. N-linked (GlcNAc...) asparagine glycosylation is found at N421, N431, and N456. 4 I-EGF domains span residues 471–494, 498–546, 547–583, and 584–624; these read CENH…PQCD, CHFD…QYCE, KDDF…DRCQ, and CPSA…RLCE. The N-linked (GlcNAc...) asparagine glycan is linked to N647. Residues 682–702 form a helical membrane-spanning segment; the sequence is RIFFIIFIVTFLIGLLKVLII. Over 703–767 the chain is Cytoplasmic; the sequence is RQVILQWNNN…NAQEAFRCNF (65 aa).

It belongs to the integrin beta chain family. As to quaternary structure, heterodimer of an alpha and a beta subunit. Beta-8 (ITGB8) associates with alpha-V (ITGAV) to form ITGAV:ITGB8. ITGAV:ITGB8 interacts with TGFB1.

Its subcellular location is the cell membrane. In terms of biological role, integrin alpha-V:beta-8 (ITGAV:ITGB8) is a receptor for fibronectin. It recognizes the sequence R-G-D in its ligands. Integrin alpha-V:beta-6 (ITGAV:ITGB6) mediates R-G-D-dependent release of transforming growth factor beta-1 (TGF-beta-1) from regulatory Latency-associated peptide (LAP), thereby playing a key role in TGF-beta-1 activation on the surface of activated regulatory T-cells (Tregs). Required during vasculogenesis. In Mus musculus (Mouse), this protein is Integrin beta-8.